Consider the following 243-residue polypeptide: Transcription factor TCP6 (243 aa).

The disordered stretch occupies residues 1–55; that stretch reads MVMEPKKNQNLPSFLNPSRQNQDNDKKRKQTEVKGFDIVVGEKRKKKENEEEDQE. The segment covering 8–21 has biased composition (polar residues); that stretch reads NQNLPSFLNPSRQN. A compositionally biased stretch (basic and acidic residues) spans 22 to 35; the sequence is QDNDKKRKQTEVKG. The stretch at 42 to 66 forms a coiled coil; sequence EKRKKKENEEEDQEIQILYEKEKKK. The region spanning 68-122 is the TCP domain; that stretch reads NKDRHLKVEGRGRRVRLPPLCAARIYQLTKELGHKSDGETLEWLLQHAEPSILSA.

As to quaternary structure, interacts with SPL.

It is found in the nucleus. This is Transcription factor TCP6 (TCP6) from Arabidopsis thaliana (Mouse-ear cress).